We begin with the raw amino-acid sequence, 316 residues long: UDP-N-acetylglucosamine transporter yea4 (316 aa).

Residues 1-3 lie on the Cytoplasmic side of the membrane; that stretch reads MIA. The helical transmembrane segment at 4–24 threads the bilayer; it reads SALSFIFGGCCSNAYALEALV. Topologically, residues 25 to 31 are lumenal; sequence REFPSSG. A helical membrane pass occupies residues 32–52; sequence ILITFSQFILITIEGLIYFLL. The Cytoplasmic portion of the chain corresponds to 53-67; it reads NDVQSLKHPKVPRKR. The helical transmembrane segment at 68–88 threads the bilayer; it reads WFVVVVMFFAINVLNNVALGF. The Lumenal segment spans residues 89-120; that stretch reads DISVPVHIILRSSGPLTTMAVGRILAGKRYSS. Residues 121–141 traverse the membrane as a helical segment; it reads LQIGSVFILTIGVIIATLGNA. The Cytoplasmic portion of the chain corresponds to 142–153; that stretch reads KDLHLHVESMTR. Residues 154–174 form a helical membrane-spanning segment; the sequence is FGIGFTILVITQILGAIMGLV. The Lumenal portion of the chain corresponds to 175–187; that stretch reads LENTYRIYGSDWR. The helical transmembrane segment at 188–208 threads the bilayer; it reads ESLFYTHALSLPFFLFLLRPI. Topologically, residues 209–214 are cytoplasmic; it reads RSQWND. The chain crosses the membrane as a helical span at residues 215 to 235; the sequence is LFAIHTKGFLNLPSGVWYLCF. The Lumenal segment spans residues 236–274; sequence NTLAQYFCVRGVNALGAETSALTVSVVLNVRKFVSLCLS. The helical transmembrane segment at 275–295 threads the bilayer; that stretch reads LILFENEMGPAVKFGALLVFG. Residues 296 to 316 lie on the Cytoplasmic side of the membrane; it reads SSAVYASARSKPKTNGLKKND.

The protein belongs to the nucleotide-sugar transporter family. SLC35B subfamily.

It localises to the endoplasmic reticulum. The protein resides in the endoplasmic reticulum membrane. Sugar transporter that specifically mediates the transport of UDP-N-acetylglucosamine (UDP-GlcNAc) and is required for cell wall chitin synthesis. This is UDP-N-acetylglucosamine transporter yea4 (yea4) from Schizosaccharomyces pombe (strain 972 / ATCC 24843) (Fission yeast).